Consider the following 280-residue polypeptide: Diaminopimelate epimerase (280 aa).

Positions 14 and 67 each coordinate substrate. Residue C76 is the Proton donor of the active site. Residues 77 to 78, N193, and 210 to 211 each bind substrate; these read GN and ER. C220 serves as the catalytic Proton acceptor. 221–222 provides a ligand contact to substrate; that stretch reads GT.

This sequence belongs to the diaminopimelate epimerase family. As to quaternary structure, homodimer.

The protein localises to the cytoplasm. The enzyme catalyses (2S,6S)-2,6-diaminopimelate = meso-2,6-diaminopimelate. It functions in the pathway amino-acid biosynthesis; L-lysine biosynthesis via DAP pathway; DL-2,6-diaminopimelate from LL-2,6-diaminopimelate: step 1/1. In terms of biological role, catalyzes the stereoinversion of LL-2,6-diaminopimelate (L,L-DAP) to meso-diaminopimelate (meso-DAP), a precursor of L-lysine. This chain is Diaminopimelate epimerase, found in Methanocella arvoryzae (strain DSM 22066 / NBRC 105507 / MRE50).